A 1118-amino-acid polypeptide reads, in one-letter code: Protein SUPPRESSOR OF NPR1-1 CONSTITUTIVE 4 (1118 aa).

A signal peptide spans 1–35; sequence MNSQQSTRTKQMLQQSSTHLLCGVVLLQLFAAQVD. Over 36 to 751 the chain is Extracellular; it reads AQRSTSPWQT…PLRNFLKVIR (716 aa). The region spanning 51–353 is the GP-PDE 1 domain; sequence PLVIARGGFS…DFPLTASASV (303 aa). N-linked (GlcNAc...) asparagine glycosylation is found at N106, N195, N251, N260, N318, N335, N362, N422, N433, N497, N557, N573, and N656. The GP-PDE 2 domain maps to 369–670; it reads FLVISKNGAS…EFPYTAARYK (302 aa). Residues 752–772 form a helical membrane-spanning segment; it reads IVSWSVAGVVLFLVLLTLVFC. The Cytoplasmic segment spans residues 773–1118; the sequence is FHRKRETRLR…SEDVSVYTEG (346 aa). A Protein kinase domain is found at 805–1094; sequence KSFAEVVGRG…ALEVPPRPVL (290 aa). Residues 811 to 819 and K833 contribute to the ATP site; that span reads VGRGGFGIV. The Proton acceptor role is filled by D928.

In the N-terminal section; belongs to the glycerophosphoryl diester phosphodiesterase family. It in the C-terminal section; belongs to the protein kinase superfamily. Ser/Thr protein kinase family. As to expression, expressed in shoots, rosette and cauline leaves, stems, flowers and siliques.

The protein localises to the cell membrane. The catalysed reaction is a sn-glycero-3-phosphodiester + H2O = an alcohol + sn-glycerol 3-phosphate + H(+). The enzyme catalyses L-seryl-[protein] + ATP = O-phospho-L-seryl-[protein] + ADP + H(+). It catalyses the reaction L-threonyl-[protein] + ATP = O-phospho-L-threonyl-[protein] + ADP + H(+). Its function is as follows. Atypical receptor-like kinase involved in disease resistance. The protein is Protein SUPPRESSOR OF NPR1-1 CONSTITUTIVE 4 of Arabidopsis thaliana (Mouse-ear cress).